The primary structure comprises 2473 residues: Reducing polyketide synthase grgA (2473 aa).

One can recognise a Ketosynthase family 3 (KS3) domain in the interval 15–446 (REPIAIVGSS…GTNAHAIIES (432 aa)). Active-site for beta-ketoacyl synthase activity residues include C188, H327, and H366. The 324-residue stretch at 559–882 (IFTGQGAQWA…SGVLKRGQNA (324 aa)) folds into the Malonyl-CoA:ACP transacylase (MAT) domain. Residues 956 to 1099 (HELLGHSVTH…GGVRLWLGEP (144 aa)) form an N-terminal hotdog fold region. Positions 956–1260 (HELLGHSVTH…IHLSAVGQRR (305 aa)) are dehydratase (DH) domain. The PKS/mFAS DH domain occupies 956–1262 (HELLGHSVTH…LSAVGQRRDP (307 aa)). The active-site Proton acceptor; for dehydratase activity is H990. Positions 1114 to 1262 (MEALDMEQLY…LSAVGQRRDP (149 aa)) are C-terminal hotdog fold. D1172 acts as the Proton donor; for dehydratase activity in catalysis. The segment at 1300–1606 (TAYFYLRQLR…PSFCSVIVAQ (307 aa)) is methyltransfrase (MT) domain. The Ketoreductase (KR) domain occupies 2108-2281 (TYLLCGMTGD…AGSVIHIAIL (174 aa)). The Carrier domain occupies 2388 to 2473 (AECLVILESC…LVEWRRLNKS (86 aa)). S2426 is subject to O-(pantetheine 4'-phosphoryl)serine.

Pantetheine 4'-phosphate serves as cofactor.

It participates in secondary metabolite biosynthesis. Its function is as follows. Reducing polyketide synthase; part of the gene cluster that mediates the biosynthesis of gregatin A, a fungal polyketide featuring an alkylated furanone core. The PKS grgA synthesizes C11 and C4 polyketide chains in the presence and absence of the trans-enoyl reductase grgB, respectively. The polyketide transferase grgF is then responsible for the fusion of the two carbon chains to produce the furanone skeleton of gregatin A. Next, the cytochrome P450 monooxygenase grgG accepts performs the oxidative cyclization to furnish the gregatin scaffold and leads to the formation of desmethylgregatin A. Finally, the O-methyltransferase grgD methylates the carboxyl group of desmethylgregatin A to provide gregatin A. The polypeptide is Reducing polyketide synthase grgA (Penicillium sp).